Reading from the N-terminus, the 123-residue chain is MKTKLGFNRLSRKSSHRRALLKNMVISFFKHEKISSTKTKLFEVKRFAERLITRAKVDTVHNRRELSKFIHDKYILNKLFTKISPVFRQRSGGYTRMIKLGKRYGDAAEMAILELVEKPLKVE.

It belongs to the bacterial ribosomal protein bL17 family. In terms of assembly, part of the 50S ribosomal subunit. Contacts protein L32.

The protein is Large ribosomal subunit protein bL17 of Borreliella burgdorferi (strain ZS7) (Borrelia burgdorferi).